Consider the following 299-residue polypeptide: CCR4-NOT transcription complex subunit 9 (299 aa).

Belongs to the CNOT9 family. Homodimer. Component of the CCR4-NOT complex.

The protein localises to the nucleus. It localises to the cytoplasm. Its subcellular location is the P-body. Its function is as follows. Component of the CCR4-NOT complex which is one of the major cellular mRNA deadenylases and is linked to various cellular processes including bulk mRNA degradation, miRNA-mediated repression, translational repression during translational initiation and general transcription regulation. Additional complex functions may be a consequence of its influence on mRNA expression. Involved in down-regulation of MYB- and JUN-dependent transcription. Enhances ligand-dependent transcriptional activity of nuclear hormone receptors. May play a role in cell differentiation. The sequence is that of CCR4-NOT transcription complex subunit 9 from Xenopus tropicalis (Western clawed frog).